A 245-amino-acid chain; its full sequence is 1-(5-phosphoribosyl)-5-[(5-phosphoribosylamino)methylideneamino] imidazole-4-carboxamide isomerase (245 aa).

Catalysis depends on Asp7, which acts as the Proton acceptor. Asp129 functions as the Proton donor in the catalytic mechanism.

It belongs to the HisA/HisF family.

The protein localises to the cytoplasm. The catalysed reaction is 1-(5-phospho-beta-D-ribosyl)-5-[(5-phospho-beta-D-ribosylamino)methylideneamino]imidazole-4-carboxamide = 5-[(5-phospho-1-deoxy-D-ribulos-1-ylimino)methylamino]-1-(5-phospho-beta-D-ribosyl)imidazole-4-carboxamide. It functions in the pathway amino-acid biosynthesis; L-histidine biosynthesis; L-histidine from 5-phospho-alpha-D-ribose 1-diphosphate: step 4/9. The protein is 1-(5-phosphoribosyl)-5-[(5-phosphoribosylamino)methylideneamino] imidazole-4-carboxamide isomerase of Salmonella dublin (strain CT_02021853).